We begin with the raw amino-acid sequence, 89 residues long: Small ribosomal subunit protein uS15 (89 aa).

It belongs to the universal ribosomal protein uS15 family. As to quaternary structure, part of the 30S ribosomal subunit. Forms a bridge to the 50S subunit in the 70S ribosome, contacting the 23S rRNA.

Its function is as follows. One of the primary rRNA binding proteins, it binds directly to 16S rRNA where it helps nucleate assembly of the platform of the 30S subunit by binding and bridging several RNA helices of the 16S rRNA. Functionally, forms an intersubunit bridge (bridge B4) with the 23S rRNA of the 50S subunit in the ribosome. The polypeptide is Small ribosomal subunit protein uS15 (Pseudoalteromonas atlantica (strain T6c / ATCC BAA-1087)).